The primary structure comprises 741 residues: NAD(P)H-quinone oxidoreductase subunit 5, chloroplastic (741 aa).

A run of 14 helical transmembrane segments spans residues 9–29, 40–60, 89–109, 122–139, 147–167, 185–205, 219–239, 258–278, 280–300, 396–416, 425–445, 544–564, 603–623, and 719–739; these read WIIP…LLLV, WAFP…DLSI, IDPL…MVLI, LRFF…LGLV, IHIF…FWFT, GDFG…SLEF, NGVN…GAVA, TPIS…FLVA, LLPI…LGII, TTFL…CFWS, WLYS…TAFY, LFPL…GIPF, IYSV…YGSV, and YLFV…FYFL.

The protein belongs to the complex I subunit 5 family. NDH is composed of at least 16 different subunits, 5 of which are encoded in the nucleus.

It localises to the plastid. The protein resides in the chloroplast thylakoid membrane. The catalysed reaction is a plastoquinone + NADH + (n+1) H(+)(in) = a plastoquinol + NAD(+) + n H(+)(out). It carries out the reaction a plastoquinone + NADPH + (n+1) H(+)(in) = a plastoquinol + NADP(+) + n H(+)(out). In terms of biological role, NDH shuttles electrons from NAD(P)H:plastoquinone, via FMN and iron-sulfur (Fe-S) centers, to quinones in the photosynthetic chain and possibly in a chloroplast respiratory chain. The immediate electron acceptor for the enzyme in this species is believed to be plastoquinone. Couples the redox reaction to proton translocation, and thus conserves the redox energy in a proton gradient. This Liriodendron tulipifera (Tuliptree) protein is NAD(P)H-quinone oxidoreductase subunit 5, chloroplastic (ndhF).